The chain runs to 582 residues: Regulatory solute carrier protein family 1 member 1 (582 aa).

Disordered regions lie at residues 1–32 (MSSL…ARSV), 56–76 (KASA…LQVL), 143–180 (EKSW…VPQD), 303–325 (VDMS…HGQP), 363–384 (VTCQ…SGRR), 390–409 (LTPS…SESG), 426–452 (ASTS…ESAR), and 483–529 (SEGA…LSTP). The span at 16 to 32 (SGQSPEVGSPTSLARSV) shows a compositional bias: polar residues. A compositionally biased stretch (polar residues) spans 148-179 (PENQTPSPVNGLQQHRETGSVQREAGQQSVPQ). Polar residues predominate over residues 390–408 (LTPSDQYSQGSCHQATSES). 2 stretches are compositionally biased toward basic and acidic residues: residues 438-452 (SPDR…ESAR) and 490-503 (PSEH…DRPE). Positions 536–576 (IFPAADVDRILGAGFTLQEALGALHRVGGNADLALLVLLAK) constitute a UBA domain.

Interacts with YRDC. As to expression, expressed in epithelial and subepithelial cells of small intestine.

It is found in the cell membrane. Its subcellular location is the nucleus. It localises to the golgi apparatus. The protein localises to the trans-Golgi network. In terms of biological role, mediates transcriptional and post-transcriptional regulation of SLC5A1. Inhibits a dynamin and PKC-dependent exocytotic pathway of SLC5A1. Also involved in transcriptional regulation of SLC22A2. Exhibits glucose-dependent, short-term inhibition of SLC5A1 and SLC22A2 by inhibiting the release of vesicles from the trans-Golgi network. Regulates the expression of SLC5A1 in a tissue-specific manner and is specifically involved in its regulation in the small intestine. The chain is Regulatory solute carrier protein family 1 member 1 (Rsc1a1) from Mus musculus (Mouse).